The primary structure comprises 580 residues: Protein O-linked-mannose beta-1,4-N-acetylglucosaminyltransferase 2 (580 aa).

Residues 1–4 (MHLS) are Cytoplasmic-facing. The helical; Signal-anchor for type II membrane protein transmembrane segment at 5-25 (AVLNALLVSVLAAVLWKHVRL) threads the bilayer. Over 26-580 (REHAAALEEE…PFADVLVCNT (555 aa)) the chain is Lumenal. N-linked (GlcNAc...) asparagine glycosylation is found at Asn99 and Asn276. The Fibronectin type-III domain occupies 488 to 580 (ARCQASVQGA…PFADVLVCNT (93 aa)).

This sequence belongs to the glycosyltransferase 61 family.

It is found in the endoplasmic reticulum membrane. It carries out the reaction 3-O-(alpha-D-mannosyl)-L-threonyl-[protein] + UDP-N-acetyl-alpha-D-glucosamine = 3-O-(N-acetyl-beta-D-glucosaminyl-(1-&gt;4)-alpha-D-mannosyl)-L-threonyl-[protein] + UDP + H(+). It participates in protein modification; protein glycosylation. O-linked mannose beta-1,4-N-acetylglucosaminyltransferase that transfers UDP-N-acetyl-D-glucosamine to the 4-position of the mannose to generate N-acetyl-D-glucosamine-beta-1,4-O-D-mannosylprotein. Involved in the biosynthesis of the phosphorylated O-mannosyl trisaccharide (N-acetylgalactosamine-beta-3-N-acetylglucosamine-beta-4-(phosphate-6-)mannose), a carbohydrate structure present in alpha-dystroglycan (DAG1), which is required for binding laminin G-like domain-containing extracellular proteins with high affinity. The protein is Protein O-linked-mannose beta-1,4-N-acetylglucosaminyltransferase 2 (POMGNT2) of Canis lupus familiaris (Dog).